The primary structure comprises 528 residues: Beta-galactoside alpha-2,6-sialyltransferase 2 (528 aa).

Over 1–10 (MKPNLKQWKQ) the chain is Cytoplasmic. Residues 11 to 31 (LMLFGIFAWGLLFLVIFIYFT) form a helical; Signal-anchor for type II membrane protein membrane-spanning segment. Residues 32 to 528 (DSNSAEPVPS…CPERNNFPPL (497 aa)) lie on the Lumenal side of the membrane. N-linked (GlcNAc...) asparagine glycosylation is found at Asn-167, Asn-308, and Asn-338. 3 disulfides stabilise this stretch: Cys-254-Cys-519, Cys-297-Cys-448, and Cys-466-Cys-477.

This sequence belongs to the glycosyltransferase 29 family.

The protein resides in the golgi apparatus. Its subcellular location is the golgi stack membrane. The catalysed reaction is a beta-D-galactoside + CMP-N-acetyl-beta-neuraminate = an N-acetyl-alpha-neuraminyl-(2-&gt;6)-beta-D-galactosyl derivative + CMP + H(+). Transfers sialic acid from the donor of substrate CMP-sialic acid to galactose containing acceptor substrates. The polypeptide is Beta-galactoside alpha-2,6-sialyltransferase 2 (ST6GAL2) (Gallus gallus (Chicken)).